The following is a 223-amino-acid chain: 7-cyano-7-deazaguanine synthase (223 aa).

12–22 (FSGGQDSTTCL) is a binding site for ATP. Zn(2+) is bound by residues Cys189, Cys198, Cys201, and Cys204.

The protein belongs to the QueC family. In terms of assembly, homodimer. Zn(2+) is required as a cofactor.

The enzyme catalyses 7-carboxy-7-deazaguanine + NH4(+) + ATP = 7-cyano-7-deazaguanine + ADP + phosphate + H2O + H(+). Its pathway is purine metabolism; 7-cyano-7-deazaguanine biosynthesis. In terms of biological role, catalyzes the ATP-dependent conversion of 7-carboxy-7-deazaguanine (CDG) to 7-cyano-7-deazaguanine (preQ(0)). The protein is 7-cyano-7-deazaguanine synthase of Halalkalibacterium halodurans (strain ATCC BAA-125 / DSM 18197 / FERM 7344 / JCM 9153 / C-125) (Bacillus halodurans).